The following is a 200-amino-acid chain: Adenylate kinase (200 aa).

10 to 15 (GAGKGT) is an ATP binding site. The NMP stretch occupies residues 30-59 (STGDMLRAAVAAGTPVGLEAKSIMESGGLV). AMP contacts are provided by residues Thr31, Arg36, 57–59 (GLV), 85–88 (GFPR), and Gln92. An LID region spans residues 126 to 142 (KRAEETAARGQPVRKDD). ATP is bound at residue Arg127. AMP contacts are provided by Arg139 and Arg150. Residue Lys178 coordinates ATP.

The protein belongs to the adenylate kinase family. Monomer.

It is found in the cytoplasm. It catalyses the reaction AMP + ATP = 2 ADP. The protein operates within purine metabolism; AMP biosynthesis via salvage pathway; AMP from ADP: step 1/1. Its function is as follows. Catalyzes the reversible transfer of the terminal phosphate group between ATP and AMP. Plays an important role in cellular energy homeostasis and in adenine nucleotide metabolism. The chain is Adenylate kinase from Methylorubrum populi (strain ATCC BAA-705 / NCIMB 13946 / BJ001) (Methylobacterium populi).